We begin with the raw amino-acid sequence, 284 residues long: 2-dehydro-3-deoxyphosphooctonate aldolase (284 aa).

The protein belongs to the KdsA family.

The protein localises to the cytoplasm. It catalyses the reaction D-arabinose 5-phosphate + phosphoenolpyruvate + H2O = 3-deoxy-alpha-D-manno-2-octulosonate-8-phosphate + phosphate. It participates in carbohydrate biosynthesis; 3-deoxy-D-manno-octulosonate biosynthesis; 3-deoxy-D-manno-octulosonate from D-ribulose 5-phosphate: step 2/3. The protein operates within bacterial outer membrane biogenesis; lipopolysaccharide biosynthesis. In Proteus mirabilis (strain HI4320), this protein is 2-dehydro-3-deoxyphosphooctonate aldolase.